A 348-amino-acid chain; its full sequence is Trace amine-associated receptor 9 (348 aa).

The Extracellular portion of the chain corresponds to 1-33; it reads MVNNFSQAEAVELCYKNVNESCIKTPYSPGPRS. N-linked (GlcNAc...) asparagine glycans are attached at residues asparagine 4 and asparagine 19. Disulfide bonds link cysteine 22–cysteine 186 and cysteine 105–cysteine 190. A helical membrane pass occupies residues 34 to 58; sequence ILYAVLGFGAVLAAFGNLLVMIAIL. Residues 59 to 68 lie on the Cytoplasmic side of the membrane; that stretch reads HFKQLHTPTN. Residues 69–90 form a helical membrane-spanning segment; that stretch reads FLIASLACADFLVGVTVMPFST. The Extracellular segment spans residues 91 to 105; it reads VRSVESCWYFGDSYC. A helical transmembrane segment spans residues 106 to 128; the sequence is KFHTCFDTSFCFASLFHLCCISV. Positions 112 and 113 each coordinate spermidine. The Cytoplasmic segment spans residues 129 to 148; sequence DRYIAVTDPLTYPTKFTVSV. The helical transmembrane segment at 149–170 threads the bilayer; the sequence is SGICIVLSWFFSVTYSFSIFYT. Topologically, residues 171–196 are extracellular; it reads GANEEGIEELVVALTCVGGCQAPLNQ. The segment at 174–187 is extracellular Loop 2 (ECL2); that stretch reads EEGIEELVVALTCV. The chain crosses the membrane as a helical span at residues 197-218; that stretch reads NWVLLCFLLFFIPNVAMVFIYS. Residues 219–256 lie on the Cytoplasmic side of the membrane; that stretch reads KIFLVAKHQARKIESTASQAQSSSESYKERVAKRERKA. A helical membrane pass occupies residues 257 to 280; sequence AKTLGIAMAAFLVSWLPYLVDAVI. Over 281-293 the chain is Extracellular; that stretch reads DAYMNFITPPYVY. The helical transmembrane segment at 294–314 threads the bilayer; sequence EILVWCVYYNSAMNPLIYAFF. Topologically, residues 315-348 are cytoplasmic; the sequence is YQWFGKAIKLIVSGKVLRTDSSTTNLFSEEVETD.

The protein belongs to the G-protein coupled receptor 1 family.

The protein localises to the cell membrane. Its function is as follows. Olfactory receptor specific for trace amines, such as N,N-dimethylcyclohexylamine (DMCHA) and beta-phenylethylamine (beta-PEA). In contrast to mouse and rat orthologs, not activated by triethylamine, cadaverine (CAD) or spermidine. Trace amine compounds are enriched in animal body fluids and act on trace amine-associated receptors (TAARs) to elicit both intraspecific and interspecific innate behaviors. Trace amine-binding causes a conformation change that triggers signaling via G(s)-class of G alpha proteins (GNAL or GNAS). In mature olfactory sensory neurons, TAAR9 is coupled with GNAL/G(olf)G alpha protein and mediates activation of adenylate cyclase activity to activate cAMP signaling and eventually transmit odorant signals to achieve membrane depolarization. In immature olfactory sensory neurons, TAAR9 is coupled with GNAS/G(s) G alpha proteins. This is Trace amine-associated receptor 9 from Homo sapiens (Human).